Here is a 298-residue protein sequence, read N- to C-terminus: N-acetylmuramic acid 6-phosphate etherase (298 aa).

The 164-residue stretch at Ile-55–Lys-218 folds into the SIS domain. Catalysis depends on Glu-83, which acts as the Proton donor. Residue Glu-114 is part of the active site.

Belongs to the GCKR-like family. MurNAc-6-P etherase subfamily. In terms of assembly, homodimer.

The enzyme catalyses N-acetyl-D-muramate 6-phosphate + H2O = N-acetyl-D-glucosamine 6-phosphate + (R)-lactate. It participates in amino-sugar metabolism; 1,6-anhydro-N-acetylmuramate degradation. The protein operates within amino-sugar metabolism; N-acetylmuramate degradation. Its pathway is cell wall biogenesis; peptidoglycan recycling. Its function is as follows. Specifically catalyzes the cleavage of the D-lactyl ether substituent of MurNAc 6-phosphate, producing GlcNAc 6-phosphate and D-lactate. Together with AnmK, is also required for the utilization of anhydro-N-acetylmuramic acid (anhMurNAc) either imported from the medium or derived from its own cell wall murein, and thus plays a role in cell wall recycling. In Shigella boydii serotype 18 (strain CDC 3083-94 / BS512), this protein is N-acetylmuramic acid 6-phosphate etherase.